We begin with the raw amino-acid sequence, 196 residues long: uncharacterized protein (196 aa).

This is an uncharacterized protein from Pasteurella multocida (strain Pm70).